A 106-amino-acid chain; its full sequence is Large ribosomal subunit protein P1 (106 aa).

The interval 69-106 (AAAAAPAEEAKEEAKEEEEEEEEVKEEEAIEGLGALFG) is disordered. The span at 83 to 98 (KEEEEEEEEVKEEEAI) shows a compositional bias: acidic residues.

The protein belongs to the eukaryotic ribosomal protein P1/P2 family. As to quaternary structure, part of the 50S ribosomal subunit. Homodimer, it forms part of the ribosomal stalk which helps the ribosome interact with GTP-bound translation factors. Forms a heptameric uL10/P0(P1)2(P1)2(P1)2 complex, where uL10/P0 forms an elongated spine to which the P1 dimers bind in a sequential fashion.

Its function is as follows. Forms part of the ribosomal stalk, playing a central role in the interaction of the ribosome with GTP-bound translation factors. This Archaeoglobus fulgidus (strain ATCC 49558 / DSM 4304 / JCM 9628 / NBRC 100126 / VC-16) protein is Large ribosomal subunit protein P1.